Reading from the N-terminus, the 724-residue chain is ATPase family protein 2 homolog (724 aa).

Residues 281 to 287 (PGSGKTL) and 503 to 508 (GCSKTL) contribute to the ATP site.

It belongs to the AAA ATPase family. AFG2 subfamily. In terms of assembly, homohexamer; ATP binding induces oligomerization. Forms a ring-shaped particle of about 12 nm diameter, that displays 6-fold radial symmetry. Interacts (via N-terminus) with kinase air-2; the interaction is direct and inhibits air-2 kinase activity in an ATPase-dependent manner.

Its subcellular location is the cytoplasm. The catalysed reaction is ATP + H2O = ADP + phosphate + H(+). ATP-dependent chaperone which uses the energy provided by ATP hydrolysis to generate mechanical force to disassemble protein complexes. Required for various steps of embryonic mitosis including centrosome duplication, spindle assembly, ER dynamics and cell cycle progression. Regulates the stability and activity of kinase air-2, a component of the chromosomal passenger complex (CPC). Inhibits air-2 kinase activity from metaphase to late telophase and negatively regulates air-2 stability during mitotic exit. Controls ER transition into sheet-like structures at the onset of mitosis, possibly by regulating homotypic membrane fusion. The chain is ATPase family protein 2 homolog from Caenorhabditis elegans.